Reading from the N-terminus, the 127-residue chain is Peptidyl-prolyl cis-trans isomerase NIMA-interacting 4 (127 aa).

A disordered region spans residues 1-33; sequence MPPKGKGGKGAKGGAASGEAADKKAQTPKGGNA. The 95-residue stretch at 31-125 folds into the PpiC domain; the sequence is GNAVKVRHIL…FGYHIIMVEG (95 aa).

This sequence belongs to the PpiC/parvulin rotamase family. PIN4 subfamily.

Its subcellular location is the nucleus. It is found in the nucleolus. It localises to the cytoplasm. The protein resides in the cytoskeleton. The protein localises to the spindle. The catalysed reaction is [protein]-peptidylproline (omega=180) = [protein]-peptidylproline (omega=0). May be involved as a ribosomal RNA processing factor in ribosome biogenesis. Binds to DNA. This Xenopus tropicalis (Western clawed frog) protein is Peptidyl-prolyl cis-trans isomerase NIMA-interacting 4 (pin4).